Reading from the N-terminus, the 263-residue chain is Renal glandular kallikrein (263 aa).

Residues 1–18 (MWFLILFLALFLGGIDAA) form the signal peptide. The propeptide at 19–24 (PPVQSR) is activation peptide. A Peptidase S1 domain is found at 25–260 (IIGGFNCEKN…YRSWIKDVMA (236 aa)). Cystine bridges form between Cys31/Cys175, Cys50/Cys66, Cys153/Cys221, Cys186/Cys200, and Cys211/Cys236. The active-site Charge relay system is His65. Residue Asn102 is glycosylated (N-linked (GlcNAc...) asparagine). Asp121 acts as the Charge relay system in catalysis. The active-site Charge relay system is Ser215.

The protein belongs to the peptidase S1 family. Kallikrein subfamily.

The catalysed reaction is Preferential cleavage of Arg-|-Xaa bonds in small molecule substrates. Highly selective action to release kallidin (lysyl-bradykinin) from kininogen involves hydrolysis of Met-|-Xaa or Leu-|-Xaa.. Functionally, glandular kallikreins cleave Met-Lys and Arg-Ser bonds in kininogen to release Lys-bradykinin. The chain is Renal glandular kallikrein from Mastomys natalensis (African soft-furred rat).